The chain runs to 569 residues: uncharacterized protein (569 aa).

Positions 1–22 (MSLLVKAALILKCASMLQGVSA) are cleaved as a signal peptide. Residues 498 to 541 (RETSILDSTNTTSTNATNTTTTTSSSSTASSSASASSSTSATSG) form a disordered region. Positions 505-540 (STNTTSTNATNTTTTTSSSSTASSSASASSSTSATS) are enriched in low complexity.

The protein localises to the secreted. The protein resides in the cell surface. This is an uncharacterized protein from Schizosaccharomyces pombe (strain 972 / ATCC 24843) (Fission yeast).